The following is a 263-amino-acid chain: Aquaporin-8 (263 aa).

Topologically, residues 1–38 are cytoplasmic; sequence MSGEQTPMCSMDLREIKGKETNMADSYHGMSWYEQYIQ. The helical transmembrane segment at 39-59 threads the bilayer; the sequence is PCVVELLGSALFIFIGCLSVI. The residue at position 55 (C55) is a Cysteine persulfide. C55 carries the post-translational modification Cysteine sulfenic acid (-SOH). Over 60–86 the chain is Extracellular; it reads ENSPNTGLLQPALAHGLALGLIIATLG. A helical membrane pass occupies residues 87–107; the sequence is NISGGHFNPAVSLAVTLVGGL. The short motif at 94–96 is the NPA 1 element; sequence NPA. The Cytoplasmic segment spans residues 108 to 109; it reads KT. The helical transmembrane segment at 110–130 threads the bilayer; that stretch reads MLLIPYWVSQLFGGMIGAALA. At 131-158 the chain is on the extracellular side; that stretch reads KVVSPEERFWNASGAAFAIVQEQEQVAE. The N-linked (GlcNAc...) asparagine glycan is linked to N141. Residues 159–179 traverse the membrane as a helical segment; sequence ALGVEIVMTMLLVLAVCMGAV. At 180–185 the chain is on the cytoplasmic side; sequence NEKTMG. The helical transmembrane segment at 186–206 threads the bilayer; sequence PLAPFSIGFSVIVDILAGGGI. The Extracellular segment spans residues 207–230; it reads SGACMNPARAFGPAVMAGYWDFHW. The NPA 2 motif lies at 212 to 214; that stretch reads NPA. A helical transmembrane segment spans residues 231–251; that stretch reads IYWLGPLLAGLFVGLLIRLFI. The Cytoplasmic portion of the chain corresponds to 252-263; it reads GDEKTRLILKSR.

This sequence belongs to the MIP/aquaporin (TC 1.A.8) family. Post-translationally, N-glycosylated. Sulfenylation at Cys-55(C55-SOH) when hydrogen peroxide flows through the AQP8 channel, making it susceptible to hydrogen sulfide produced by CBS. In terms of processing, persulfidation at Cys-55 is required to gate AQP8 channel; under stress condition, hydrogen peroxide accumulates in the cell leading to CBS activation that produces hydrogen sulfide inducing persulfidation of oxidized Cys-55 (C55-SOH). In terms of tissue distribution, highly expressed in sperm, pancreas and liver. Expressed in hepatocytes, acinal cells of pancreas and salivary gland, and absorptive colonic epithelial cells. Expressed in the myoepithelium of submandibular and parotid glands. Expressed in pancreatic beta-cells. Expressed in testis but not in epididymis. Expressed in small intestine.

The protein localises to the cell membrane. It is found in the mitochondrion inner membrane. It localises to the apical cell membrane. The protein resides in the basolateral cell membrane. Its subcellular location is the smooth endoplasmic reticulum membrane. It carries out the reaction H2O(in) = H2O(out). The enzyme catalyses NH4(+)(in) = NH4(+)(out). It catalyses the reaction H2O2(out) = H2O2(in). The catalysed reaction is formamide(out) = formamide(in). It carries out the reaction methylamine(out) = methylamine(in). With respect to regulation, reversibly gated by a two-step sulfenylation-persulfidation process in cells undergoing diverse stresses. In terms of biological role, channel that allows the facilitated permeation of water and uncharged molecules, such as hydrogen peroxide and the neutral form of ammonia (NH3), through cellular membranes such as plasma membrane, inner mitochondrial membrane and endoplasmic reticulum membrane of several tissues. The transport of ammonia neutral form induces a parallel transport of proton, at alkaline pH when the concentration of ammonia is high. However, it is unclear whether the transport of proton takes place via the aquaporin or via an endogenous pathway. Also, may transport ammonia analogs such as formamide and methylamine, a transport favourited at basic pH due to the increase of unprotonated (neutral) form, which is expected to favor diffusion. Does not transport urea or glycerol. The water transport mechanism is mercury- and copper-sensitive and passive in response to osmotic driving forces. At the canicular plasma membrane, mediates the osmotic transport of water toward the bile canaliculus and facilitates the cAMP-induced bile canalicular water secretion, a process involved in bile formation. In addition, mediates the hydrogen peroxide release from hepatocyte mitochondria that modulates the SREBF2-mediated cholesterol synthesis and facilitates the mitochondrial ammonia uptake which is metabolized into urea, mainly under glucagon stimulation. In B cells, transports the CYBB-generated hydrogen peroxide from the external leaflet of the plasma membrane to the cytosol to promote B cell activation and differentiation for signal amplification. In the small intestine and colon system, mediates water transport through mitochondria and apical membrane of epithelial cells. May play an important role in the adaptive response of proximal tubule cells to acidosis possibly facilitating mitochondrial ammonia transport. This chain is Aquaporin-8, found in Rattus norvegicus (Rat).